The chain runs to 201 residues: Recombination protein RecR (201 aa).

The C4-type zinc-finger motif lies at 57 to 72 (CECCRTLTEEPLCRIC). Residues 81 to 176 (GVLCIVETPA…NTTRIAHGVP (96 aa)) form the Toprim domain.

This sequence belongs to the RecR family.

May play a role in DNA repair. It seems to be involved in an RecBC-independent recombinational process of DNA repair. It may act with RecF and RecO. The sequence is that of Recombination protein RecR from Idiomarina loihiensis (strain ATCC BAA-735 / DSM 15497 / L2-TR).